The primary structure comprises 293 residues: Phosphatidylglycerol--prolipoprotein diacylglyceryl transferase (293 aa).

4 helical membrane-spanning segments follow: residues 45–65 (FELRWYSTLILMGFLISYFVA), 81–101 (ELIFYGVIAGIVGARLYYVLF), 115–135 (IWEGGLAIHGAVIGALLTGFL), and 144–164 (FTFLQATDLFTSVLPLGQAIG). Arginine 165 serves as a coordination point for a 1,2-diacyl-sn-glycero-3-phospho-(1'-sn-glycerol). Helical transmembrane passes span 204–224 (PTFLYESIWDLLVFFMLSVYF), 231–249 (HGEVTCLYFVLYSLGRIVI), and 262–282 (IKAAQLLSAVLILLGFTGFLI).

This sequence belongs to the Lgt family.

The protein localises to the cell inner membrane. The catalysed reaction is L-cysteinyl-[prolipoprotein] + a 1,2-diacyl-sn-glycero-3-phospho-(1'-sn-glycerol) = an S-1,2-diacyl-sn-glyceryl-L-cysteinyl-[prolipoprotein] + sn-glycerol 1-phosphate + H(+). The protein operates within protein modification; lipoprotein biosynthesis (diacylglyceryl transfer). Functionally, catalyzes the transfer of the diacylglyceryl group from phosphatidylglycerol to the sulfhydryl group of the N-terminal cysteine of a prolipoprotein, the first step in the formation of mature lipoproteins. The polypeptide is Phosphatidylglycerol--prolipoprotein diacylglyceryl transferase (Thermotoga maritima (strain ATCC 43589 / DSM 3109 / JCM 10099 / NBRC 100826 / MSB8)).